Reading from the N-terminus, the 143-residue chain is Large ribosomal subunit protein uL11 (143 aa).

It belongs to the universal ribosomal protein uL11 family. Part of the ribosomal stalk of the 50S ribosomal subunit. Interacts with L10 and the large rRNA to form the base of the stalk. L10 forms an elongated spine to which L12 dimers bind in a sequential fashion forming a multimeric L10(L12)X complex. In terms of processing, one or more lysine residues are methylated.

Functionally, forms part of the ribosomal stalk which helps the ribosome interact with GTP-bound translation factors. The sequence is that of Large ribosomal subunit protein uL11 from Burkholderia cenocepacia (strain HI2424).